The sequence spans 83 residues: Mu-theraphotoxin-Hhn2j 2 (83 aa).

An N-terminal signal peptide occupies residues 1–21 (MKASMFLALAGLVLLFVVGYA). Residues 22-48 (SESEEKEFPIELLSKIFAVDVFKGEDR) constitute a propeptide that is removed on maturation. Cystine bridges form between Cys-50/Cys-65, Cys-57/Cys-70, and Cys-64/Cys-77. At Leu-81 the chain carries Leucine amide.

The protein belongs to the neurotoxin 10 (Hwtx-1) family. 15 (Hntx-3) subfamily. Monomer. In terms of tissue distribution, expressed by the venom gland.

The protein resides in the secreted. Functionally, lethal neurotoxin. Selectively blocks tetrodotoxin-sensitive voltage-gated sodium channels (Nav). Does not affect tetrodotoxin-resistant voltage-gated sodium channels or calcium channels. The polypeptide is Mu-theraphotoxin-Hhn2j 2 (Cyriopagopus hainanus (Chinese bird spider)).